Here is a 578-residue protein sequence, read N- to C-terminus: CTP synthase (578 aa).

One can recognise a Glutamine amidotransferase type-1 domain in the interval 305–559 (KIALVGKYTN…LGLVAASSGI (255 aa)). Catalysis depends on for GATase activity residues Cys404, His535, and Glu537.

The protein belongs to the CTP synthase family.

It catalyses the reaction UTP + L-glutamine + ATP + H2O = CTP + L-glutamate + ADP + phosphate + 2 H(+). It participates in pyrimidine metabolism; CTP biosynthesis via de novo pathway; CTP from UDP: step 2/2. Catalyzes the ATP-dependent amination of UTP to CTP with either L-glutamine or ammonia as the source of nitrogen. The chain is CTP synthase (URA7) from Candida glabrata (strain ATCC 2001 / BCRC 20586 / JCM 3761 / NBRC 0622 / NRRL Y-65 / CBS 138) (Yeast).